A 175-amino-acid polypeptide reads, in one-letter code: Polyadenylate-binding protein-interacting protein 6 (175 aa).

The short motif at 7–17 (TLNPYAAAYVP) is the PAM2-like element. Positions 83–126 (EMDMDIEYLLATYPGLSQESINDVYLANTCDLDATIEMLNQLEI) constitute a CUE domain. Residues 145 to 175 (PEIITESSKQKNDGSSASSSSGIRNANVSSS) form a disordered region. Positions 166 to 175 (GIRNANVSSS) are enriched in polar residues.

The chain is Polyadenylate-binding protein-interacting protein 6 (CID6) from Arabidopsis thaliana (Mouse-ear cress).